The primary structure comprises 100 residues: uncharacterized protein (100 aa).

The stretch at 65–96 (PELSKNWEKLKKEIEQKHKEIQELISEFDNMF) forms a coiled coil.

This is an uncharacterized protein from Acidianus filamentous virus 2 (isolate Italy/Pozzuoli) (AFV-2).